The chain runs to 890 residues: Alanine--tRNA ligase (890 aa).

Zn(2+) is bound by residues H568, H572, C680, and H684.

The protein belongs to the class-II aminoacyl-tRNA synthetase family. It depends on Zn(2+) as a cofactor.

It localises to the cytoplasm. The catalysed reaction is tRNA(Ala) + L-alanine + ATP = L-alanyl-tRNA(Ala) + AMP + diphosphate. In terms of biological role, catalyzes the attachment of alanine to tRNA(Ala) in a two-step reaction: alanine is first activated by ATP to form Ala-AMP and then transferred to the acceptor end of tRNA(Ala). Also edits incorrectly charged Ser-tRNA(Ala) and Gly-tRNA(Ala) via its editing domain. This is Alanine--tRNA ligase from Psychrobacter arcticus (strain DSM 17307 / VKM B-2377 / 273-4).